Consider the following 798-residue polypeptide: MKFNENWLREWINPKITSVSLRNQIVESGIEIESIHEFNPIFDGFLVGKIVECINPCKGNNLKILKVDVGYKKLLNIVCGASNCRNNIKVVVATIDSILPNGSKIKIKKIKEKLSEGMICSFFELGLFNFCKDIIELPEDIPIGKKINDLFLLKKDTFIKVAVTPNRPDGLSILGIARNIAAINNLKKIRLKKRILPTTIEDQFPITINTEKQSVNYFGRIIQNVNLNVDTPFWMKKKLFFCDLLSDNIIENILNYILIEIGQPLNILNADKIDDVIEIRMAIKKEFLILKNDTRIVLDKDILVFSDKTKILFIPGNINNSDLEPNKNTKNIFLTSYLVDKKSILNILKKIDSNNILDYYSHGVDASLQKYAIEYATYLIVKICGGKIGPINTKKSNFNSLSCSNKIKLYHQNFNKCIDSFVDSSIISNILLCLEYKVNFHKKYWYVFPPSWRFDILIEEDVIGDILRIYNYNNIPLTPLKQNYYFNSKNKDLKSPLLDEAAVLLINRGYYEIITYSFINPSLQDDIIPNNNQILISNPISKDFSSMRLSLWPGLLKTVSYNKNRQQESMRFFERGLCFSIDESQILGIRQEMFLGGVISGFYSKENWFSVRRKVDFYDLKGDLESLLEVICGLNKFEIRHQNILGLHPEQSAKIYLDNKYIGSLGKIHPKIEKKLNLYNSTFLFELSLNYISKLKFYNTEEISKYPTSRRDIAILVSKDIPFLDIITVCKDFFVNKKVEINLFDVYSCKEFDNRKKSLGISFVFQNFKKNLKENEVNLMLHDCIKILKKKFQVVLRK.

The 110-residue stretch at 39-148 (NPIFDGFLVG…EDIPIGKKIN (110 aa)) folds into the tRNA-binding domain. The B5 domain occupies 402-477 (SCSNKIKLYH…RIYNYNNIPL (76 aa)). Residues aspartate 455, aspartate 461, and aspartate 465 each contribute to the Mg(2+) site. The 94-residue stretch at 704–797 (SKYPTSRRDI…LKKKFQVVLR (94 aa)) folds into the FDX-ACB domain.

It belongs to the phenylalanyl-tRNA synthetase beta subunit family. Type 1 subfamily. Tetramer of two alpha and two beta subunits. The cofactor is Mg(2+).

The protein resides in the cytoplasm. It catalyses the reaction tRNA(Phe) + L-phenylalanine + ATP = L-phenylalanyl-tRNA(Phe) + AMP + diphosphate + H(+). This chain is Phenylalanine--tRNA ligase beta subunit (pheT), found in Buchnera aphidicola subsp. Schizaphis graminum (strain Sg).